The primary structure comprises 58 residues: Photosystem II reaction center protein K (58 aa).

Residues 1 to 21 constitute a propeptide that is removed on maturation; it reads MLAIFNIYLDNAFHLNGIILA. Residues 29–49 traverse the membrane as a helical segment; that stretch reads IFDPIVDVMPIIPVFFFLLAF.

It belongs to the PsbK family. In terms of assembly, PSII is composed of 1 copy each of membrane proteins PsbA, PsbB, PsbC, PsbD, PsbE, PsbF, PsbH, PsbI, PsbJ, PsbK, PsbL, PsbM, PsbT, PsbX, PsbY, PsbZ, Psb30/Ycf12, at least 3 peripheral proteins of the oxygen-evolving complex and a large number of cofactors. It forms dimeric complexes.

It localises to the plastid. Its subcellular location is the chloroplast thylakoid membrane. Functionally, one of the components of the core complex of photosystem II (PSII). PSII is a light-driven water:plastoquinone oxidoreductase that uses light energy to abstract electrons from H(2)O, generating O(2) and a proton gradient subsequently used for ATP formation. It consists of a core antenna complex that captures photons, and an electron transfer chain that converts photonic excitation into a charge separation. This chain is Photosystem II reaction center protein K, found in Physcomitrium patens (Spreading-leaved earth moss).